Here is a 663-residue protein sequence, read N- to C-terminus: DNA ligase (663 aa).

Residues 31–35 (DYEYD), 80–81 (SL), and glutamate 109 contribute to the NAD(+) site. The N6-AMP-lysine intermediate role is filled by lysine 111. Residues arginine 132, glutamate 167, lysine 283, and lysine 307 each coordinate NAD(+). Positions 401, 404, 419, and 424 each coordinate Zn(2+). Positions 586–663 (KIDNRFLGKT…TEEDLKDMIK (78 aa)) constitute a BRCT domain.

It belongs to the NAD-dependent DNA ligase family. LigA subfamily. The cofactor is Mg(2+). Mn(2+) is required as a cofactor.

It catalyses the reaction NAD(+) + (deoxyribonucleotide)n-3'-hydroxyl + 5'-phospho-(deoxyribonucleotide)m = (deoxyribonucleotide)n+m + AMP + beta-nicotinamide D-nucleotide.. DNA ligase that catalyzes the formation of phosphodiester linkages between 5'-phosphoryl and 3'-hydroxyl groups in double-stranded DNA using NAD as a coenzyme and as the energy source for the reaction. It is essential for DNA replication and repair of damaged DNA. The sequence is that of DNA ligase from Clostridium kluyveri (strain NBRC 12016).